The sequence spans 93 residues: Large ribosomal subunit protein uL23cz/uL23cy (93 aa).

It belongs to the universal ribosomal protein uL23 family. In terms of assembly, part of the 50S ribosomal subunit.

It is found in the plastid. The protein resides in the chloroplast. In terms of biological role, binds to 23S rRNA. The sequence is that of Large ribosomal subunit protein uL23cz/uL23cy (rpl23-A) from Phaseolus angularis (Azuki bean).